A 111-amino-acid polypeptide reads, in one-letter code: Prothymosin alpha (111 aa).

Residue Met1 is modified to N-acetylmethionine. A disordered region spans residues 1 to 111 (MSDAAVDTSS…TKKQKTDEDD (111 aa)). Ser2 carries the N-acetylserine; in Prothymosin alpha, N-terminally processed modification. Ser2 is subject to Phosphoserine. Thr8 bears the Phosphothreonine mark. A phosphoserine mark is found at Ser9 and Ser10. A phosphothreonine mark is found at Thr13 and Thr14. Positions 13-31 (TTKDLKEKKEVVEEAENGR) are enriched in basic and acidic residues. Lys15 bears the N6-acetyllysine; alternate mark. The residue at position 15 (Lys15) is an N6-succinyllysine; alternate. The span at 40–84 (ENEENGEQEADNEVDEEEEEGGEEEEEEEEGDGEEEDGDEDEEAE) shows a compositional bias: acidic residues. A compositionally biased stretch (basic and acidic residues) spans 101–111 (DTKKQKTDEDD). Thr102 carries the post-translational modification Phosphothreonine. An N6-acetyllysine; alternate modification is found at Lys103. Residue Lys103 forms a Glycyl lysine isopeptide (Lys-Gly) (interchain with G-Cter in SUMO2); alternate linkage. Residue Thr107 is modified to Phosphothreonine.

This sequence belongs to the pro/parathymosin family. Interacts with NUPR1; regulates apoptotic process. In terms of processing, covalently linked to a small RNA of about 20 nucleotides.

The protein localises to the nucleus. In terms of biological role, prothymosin alpha may mediate immune function by conferring resistance to certain opportunistic infections. In Homo sapiens (Human), this protein is Prothymosin alpha (PTMA).